An 81-amino-acid chain; its full sequence is MSSGGLLLLLGLLTLWAELTPVSGRPRFCELAPSAGSCFAFVPSYYYNQYSNTCHSFTYSGCGGNANRFRTIDECNRTCVG.

A signal peptide spans 1–24 (MSSGGLLLLLGLLTLWAELTPVSG). One can recognise a BPTI/Kunitz inhibitor domain in the interval 29–79 (CELAPSAGSCFAFVPSYYYNQYSNTCHSFTYSGCGGNANRFRTIDECNRTC). 3 disulfides stabilise this stretch: cysteine 29–cysteine 79, cysteine 38–cysteine 62, and cysteine 54–cysteine 75. N-linked (GlcNAc...) asparagine glycosylation is present at asparagine 76.

In terms of tissue distribution, expressed by the venom gland.

It localises to the secreted. Its function is as follows. Serine protease inhibitor that inhibits chymotrypsin (Ki=25 nM). Also interacts with vasopressin V2 receptor (V2R/AVPR2). Inhibits vasopressin binding human V2R in the nanomolar range (Ki=112 nM), and also moderately inhibits vasopressin-induced cAMP production (IC(50)=138 nM). In vivo, intraperitoneal injection of this protein into rats increases diuresis by 2.2-fold, without any loss of electrolytes. This chain is Kunitz-type serine protease inhibitor NACI, found in Naja atra (Chinese cobra).